Consider the following 445-residue polypeptide: FAS-associated factor 2 (445 aa).

An N-acetylalanine modification is found at Ala-2. The 37-residue stretch at 12–48 (EQTEKLLQFQDLTGIESMDQCRHTLEQHNWNIEAAVQ) folds into the UBA domain. At Lys-167 the chain carries N6-acetyllysine. Positions 275 to 350 (SERLEREERN…EEKERKLECL (76 aa)) form a coiled coil. A disordered region spans residues 299–361 (ASLRADQEKE…PEPSPDDPES (63 aa)). Over residues 303 to 348 (ADQEKERKKREERERKRRKEEEVQQQKLAEERRRRNLQEEKERKLE) the composition is skewed to basic and acidic residues. Residues 357 to 439 (DDPESVKIIF…GLSHTEVLFV (83 aa)) enclose the UBX domain.

In terms of assembly, identified in a complex that contains SEL1L, OS9, FAF2/UBXD8, UBE2J1/UBC6E and AUP1. Interacts with YOD1. Interacts (via N-terminus) with UBQLN2 (via C-terminus). Interacts with PNPLA2 and UBAC2. Interacts with ZFAND2B; probably through VCP. Interacts with LMBR1L.

It is found in the cytoplasm. The protein localises to the lipid droplet. Its subcellular location is the endoplasmic reticulum. Its function is as follows. Plays an important role in endoplasmic reticulum-associated degradation (ERAD) that mediates ubiquitin-dependent degradation of misfolded endoplasmic reticulum proteins. By controlling the steady-state expression of the IGF1R receptor, indirectly regulates the insulin-like growth factor receptor signaling pathway. Involved in inhibition of lipid droplet degradation by binding to phospholipase PNPL2 and inhibiting its activity by promoting dissociation of PNPL2 from its endogenous activator, ABHD5 which inhibits the rate of triacylglycerol hydrolysis. Involved in stress granule disassembly: associates with ubiquitinated G3BP1 in response to heat shock, thereby promoting interaction between ubiquitinated G3BP1 and VCP, followed by G3BP1 extraction from stress granules and stress granule disassembly. This Bos taurus (Bovine) protein is FAS-associated factor 2 (FAF2).